The sequence spans 2122 residues: Pecanex-like protein 2 (2122 aa).

Helical transmembrane passes span 36–53 (LYLW…HLAF) and 60–82 (ALFY…YRLH). Disordered stretches follow at residues 92–164 (QHRS…ELPA) and 180–250 (QPEA…LVNP). Polar residues-rich tracts occupy residues 146-157 (SRGQSVHSQHSS) and 185-203 (ASST…SQGR). Residue N288 is glycosylated (N-linked (GlcNAc...) asparagine). Composition is skewed to low complexity over residues 392–407 (VTSS…AESA) and 458–476 (PDRC…PGST). Disordered regions lie at residues 392–556 (VTSS…QIPN) and 575–634 (VVAP…PVFT). The segment covering 528–538 (STKEVVSDGEK) has biased composition (basic and acidic residues). N-linked (GlcNAc...) asparagine glycosylation occurs at N556. The segment covering 599 to 618 (TKEEAVENEKPNGRDPKPGK) has biased composition (basic and acidic residues). Residues 625–634 (DPANGSPVFT) show a composition bias toward polar residues. The next 13 membrane-spanning stretches (helical) occupy residues 825 to 845 (VAVL…NRGF), 849 to 869 (LWVL…LKSV), 882 to 902 (QIIA…ILLL), 933 to 953 (HLIV…FPQI), 976 to 998 (GITS…HAFC), 1010 to 1030 (HIPA…YHLS), 1080 to 1100 (LVIC…TVFL), 1105 to 1125 (FLSI…HHLL), 1174 to 1194 (YLLY…SISN), 1218 to 1238 (SFCN…FFHF), 1245 to 1265 (ESFL…GDLL), 1270 to 1290 (FVLA…HVFA), and 1305 to 1325 (TFAT…VIFI). N1393, N1534, and N1802 each carry an N-linked (GlcNAc...) asparagine glycan. Disordered regions lie at residues 1858-1943 (SVGQ…SSGP) and 1955-1991 (STSV…TTGH). A compositionally biased stretch (basic and acidic residues) spans 1888 to 1898 (ESRDGSTEQPR). The span at 1922–1942 (SQSVQAHSAISQRPPTLSSSG) shows a compositional bias: polar residues. Over residues 1968 to 1981 (SRLSLHTSAASLHS) the composition is skewed to low complexity. N2039 carries an N-linked (GlcNAc...) asparagine glycan. The tract at residues 2097–2122 (VLCRRASQEDMGLDDTASQQSTSDEQ) is disordered. Positions 2112–2122 (TASQQSTSDEQ) are enriched in polar residues.

The protein belongs to the pecanex family.

It is found in the membrane. Functionally, may play a role in tumorigenesis. This is Pecanex-like protein 2 from Mus musculus (Mouse).